The primary structure comprises 110 residues: NADH dehydrogenase [ubiquinone] iron-sulfur protein 6, mitochondrial (110 aa).

Residues 1 to 22 (MASNLLKALIRSQILPSSRRNF) constitute a mitochondrion transit peptide.

Belongs to the complex I NDUFS6 subunit family. As to quaternary structure, complex I is composed of at least 49 different subunits. This is a component of the iron-sulfur (IP) fragment of the enzyme.

The protein localises to the mitochondrion inner membrane. In terms of biological role, accessory subunit of the mitochondrial membrane respiratory chain NADH dehydrogenase (Complex I), that is believed not to be involved in catalysis. Complex I functions in the transfer of electrons from NADH to the respiratory chain. The immediate electron acceptor for the enzyme is believed to be ubiquinone. This chain is NADH dehydrogenase [ubiquinone] iron-sulfur protein 6, mitochondrial, found in Arabidopsis thaliana (Mouse-ear cress).